The chain runs to 146 residues: Small ribosomal subunit protein eS19 (146 aa).

This sequence belongs to the eukaryotic ribosomal protein eS19 family.

This chain is Small ribosomal subunit protein eS19 (RPS19A), found in Oryza sativa subsp. japonica (Rice).